Consider the following 688-residue polypeptide: MATSSHQGAAAGSQAEHRSCEASVGQGERPSASQGQEGNFKQNQGTSTLRLLLLGKQGAGKSATGNTILGKAVFESKFSDHMVTDRCQSESVSVRGKQVIVIDTPDLFSSLSCSEVRQQNLKQCLELLADDHCVLLLVTPIGHYTEEDRETIEGIWGKIGPKAYRHMIVVFTREDELDEDSLWNYIESKESLKELIKNIGSRRCCTFNNKADKKQRELQVFKLLDAIELLMMESPEPYFEPLKMESSGVQGCGNGVTYEGDTLCGSKKRQPQITGPDCDPDMPELRVLLMGKRGVGKSAAGNSILGKQVFKTQFSEKQRVTKAFASHSRVWQGKKVLIIDSPEISSWKLDESAVKNHTFPGPHAFLLVTPLGSSLKSDDDVFSIIKRIFGEKFTKFTIVLFTRKEDFEDQALDKVIKENDALYNLTQKFGERYAIFNYRASVEEEQSQVGKLLSQIEKMVQCHSNKPCVIREKELLNIILLGRSGAGKSATGNTILGRSAFFSQLRAQPVTSSSQSGKRTLDWQDVVVVDTPSFIQTPGTEKDPSRLKEEIHHCLSLCEEGMKIFVLVLQLGRFTQEDEVVVEQLEASFEENIMKYMIVLFTRKEDLGDGDLHDYTNNTKNKALKKILKKCNGRVCAFNNKETGEDQETQVKGLLKIANSLKKNYDEHSNSWVGQLKSTLGQITMAFK.

A compositionally biased stretch (low complexity) spans Met-1–Gln-14. A disordered region spans residues Met-1–Gln-42. Positions Ser-31 to Gln-42 are enriched in polar residues. AIG1-type G domains lie at Thr-46–Ser-247, Met-282–Glu-472, and Lys-473–Lys-677. Positions Gly-55–Ser-62 are G1. GTP-binding positions include Gly-55 to Ala-63 and Ser-76. The G2 stretch occupies residues Met-82–Arg-86. Positions Asp-103–Asp-106 are G3. The tract at residues Thr-172 to Asp-175 is G4. GTP contacts are provided by residues Arg-173 to Asp-175 and Asn-209. Residues Asn-208–Lys-210 are G5.

Belongs to the TRAFAC class TrmE-Era-EngA-EngB-Septin-like GTPase superfamily. AIG1/Toc34/Toc159-like paraseptin GTPase family. IAN subfamily. Abundantly expressed in the thymus (in thymocytes), spleen (in splenocytes), lymph node, followed by bone marrow and lung.

Its subcellular location is the endoplasmic reticulum. The protein resides in the golgi apparatus. It is found in the mitochondrion. The protein localises to the cytoplasm. It localises to the cytosol. Exerts an anti-apoptotic effect in the immune system and is involved in responses to infections. In Mus musculus (Mouse), this protein is GTPase IMAP family member 8 (Gimap8).